The sequence spans 332 residues: Adenosine receptor A2b (332 aa).

The Extracellular portion of the chain corresponds to 1–8; that stretch reads MPLEAQDA. Residues 9–33 traverse the membrane as a helical segment; it reads VYVALELALAALSVTGNVLVCAAVG. The Cytoplasmic portion of the chain corresponds to 34 to 43; sequence TSSALQTPTN. A helical transmembrane segment spans residues 44–67; the sequence is YFLVSLAAADVAVGLFAIPFAVTI. Topologically, residues 68–78 are extracellular; sequence SLGFCTDFHSC. A disulfide bridge links Cys78 with Cys170. A helical transmembrane segment spans residues 79–101; it reads LFLACFVLVLTQSSIFSLLAVAV. At 102-121 the chain is on the cytoplasmic side; the sequence is DRYLAVRVPLRYKSLVTGAR. A helical membrane pass occupies residues 122-144; the sequence is ARGVIAALWVLAFGIGLTPFLGW. Residues 145–177 are Extracellular-facing; sequence NDRKIATNCTEPGDAATNVSCCLIRCLFENVVP. N-linked (GlcNAc...) asparagine glycosylation is found at Asn152 and Asn162. Glu173 is a binding site for adenosine. A helical transmembrane segment spans residues 178 to 202; sequence MSYMVYFNFFGCVLPPLLIMLVIYV. Residues 203–234 are Cytoplasmic-facing; the sequence is KIFLVACRQLQRTELMDHSRTVLQREIHAAKS. Residues 235–258 form a helical membrane-spanning segment; sequence LALIVGIFALCWLPVHTINCASLF. Asn253 is an adenosine binding site. Residues 259–266 lie on the Extracellular side of the membrane; that stretch reads QPTWAKVK. The helical transmembrane segment at 267-290 threads the bilayer; that stretch reads PKWAINTAILLSHANSAVNPIVYA. Adenosine is bound by residues Ser278 and His279. Over 291–332 the chain is Cytoplasmic; that stretch reads YRNRDFRYTFHKIISRYILCRTHILKSGEGQVGSQPTLQLGL. A lipid anchor (S-palmitoyl cysteine) is attached at Cys310.

It belongs to the G-protein coupled receptor 1 family.

It localises to the cell membrane. Receptor for adenosine. The activity of this receptor is mediated by G proteins which activate adenylyl cyclase. The polypeptide is Adenosine receptor A2b (ADORA2B) (Bos taurus (Bovine)).